Consider the following 251-residue polypeptide: B3 domain-containing protein At2g24670 (251 aa).

The tract at residues 48 to 111 is disordered; that stretch reads TTPSTVMESK…SSKTREPTPG (64 aa). A compositionally biased stretch (basic and acidic residues) spans 56–70; sequence SKSHIHDHSLRESPT. Positions 153-249 form a DNA-binding region, TF-B3; that stretch reads VSQIVELEFL…TLYFALVPLY (97 aa).

It is found in the nucleus. In Arabidopsis thaliana (Mouse-ear cress), this protein is B3 domain-containing protein At2g24670.